Here is a 418-residue protein sequence, read N- to C-terminus: 1-acylglycerol-3-phosphate O-acyltransferase (418 aa).

The AB hydrolase-1 domain occupies 121–251 (PTLVMVHGYG…RATWKGAVLN (131 aa)). The GXSXG motif lies at 197 to 201 (GHSFG). Positions 379-384 (HFVFID) match the HXXXXD motif motif.

It belongs to the peptidase S33 family. ABHD4/ABHD5 subfamily.

It is found in the cytoplasm. The enzyme catalyses a 1-acyl-sn-glycero-3-phosphate + an acyl-CoA = a 1,2-diacyl-sn-glycero-3-phosphate + CoA. Its function is as follows. Lysophosphatidic acid acyltransferase which functions in phosphatidic acid biosynthesis. Is highly specific for lysophosphatidic acid and able to use different acyl-CoA donors. May regulate neutral lipid accumulation and participate in the regulation of lipid turnover in vegetative cells. Possesses additional triacylglycerol lipase and phospholipase A2 activities in vitro. Is not active as esterase or lysophospholipase. This Arabidopsis thaliana (Mouse-ear cress) protein is 1-acylglycerol-3-phosphate O-acyltransferase.